The following is a 457-amino-acid chain: RuvB-like helicase 1 (457 aa).

An ATP-binding site is contributed by 73–80 (GGPSTGKT).

The protein belongs to the RuvB family. As to quaternary structure, may form heterododecamers with RVB2. Component of the SWR1 chromatin remodeling complex, the INO80 chromatin remodeling complex, and of the R2TP complex.

It is found in the nucleus. The catalysed reaction is ATP + H2O = ADP + phosphate + H(+). Functionally, DNA helicase which participates in several chromatin remodeling complexes, including the SWR1 and the INO80 complexes. The SWR1 complex mediates the ATP-dependent exchange of histone H2A for the H2A variant HZT1 leading to transcriptional regulation of selected genes by chromatin remodeling. The INO80 complex remodels chromatin by shifting nucleosomes and is involved in DNA repair. Also involved in pre-rRNA processing. This chain is RuvB-like helicase 1 (RVB1), found in Kluyveromyces lactis (strain ATCC 8585 / CBS 2359 / DSM 70799 / NBRC 1267 / NRRL Y-1140 / WM37) (Yeast).